A 498-amino-acid polypeptide reads, in one-letter code: Glycerol kinase (498 aa).

Thr14 provides a ligand contact to ADP. Positions 14, 15, and 16 each coordinate ATP. Thr14 provides a ligand contact to sn-glycerol 3-phosphate. Arg18 is a binding site for ADP. 3 residues coordinate sn-glycerol 3-phosphate: Arg84, Glu85, and Tyr136. Glycerol is bound by residues Arg84, Glu85, and Tyr136. His232 carries the phosphohistidine; by HPr modification. Asp246 is a binding site for sn-glycerol 3-phosphate. 2 residues coordinate glycerol: Asp246 and Gln247. ADP contacts are provided by Thr268 and Gly311. The ATP site is built by Thr268, Gly311, Gln315, and Gly412. 2 residues coordinate ADP: Gly412 and Asn416.

The protein belongs to the FGGY kinase family. As to quaternary structure, homotetramer and homodimer (in equilibrium). Post-translationally, the phosphoenolpyruvate-dependent sugar phosphotransferase system (PTS), including enzyme I, and histidine-containing protein (HPr) are required for the phosphorylation, which leads to the activation of the enzyme.

The catalysed reaction is glycerol + ATP = sn-glycerol 3-phosphate + ADP + H(+). Its pathway is polyol metabolism; glycerol degradation via glycerol kinase pathway; sn-glycerol 3-phosphate from glycerol: step 1/1. Its activity is regulated as follows. Activated by phosphorylation and inhibited by fructose 1,6-bisphosphate (FBP). Key enzyme in the regulation of glycerol uptake and metabolism. Catalyzes the phosphorylation of glycerol to yield sn-glycerol 3-phosphate. The chain is Glycerol kinase from Lactococcus lactis subsp. lactis (strain IL1403) (Streptococcus lactis).